Here is a 241-residue protein sequence, read N- to C-terminus: MEMERINDDTIRVTISSDDLNERGVTFLDLLDNHKEIESFFYSVLEEVDTDHQFASNDAVTFQVLPNRNGLELYISKNPTDGMEEAIKSVSKDNAPSNGEMDEVSDFLKRKLAETDSNDKNNDDSSYMSDGNPADLNGYANGVGSTQKSVIELEDFESLPSIAELIKTNSGIESVLYRYHDIYYLELTFFTSENSPETIKNDLAIAYEYGNSTIVSSEVLREHGEVVMDGAALELAKRYFK.

The tract at residues 115–141 (TDSNDKNNDDSSYMSDGNPADLNGYAN) is disordered.

The protein belongs to the MecA family. Homodimer.

Its function is as follows. Enables the recognition and targeting of unfolded and aggregated proteins to the ClpC protease or to other proteins involved in proteolysis. This is Adapter protein MecA from Pediococcus pentosaceus (strain ATCC 25745 / CCUG 21536 / LMG 10740 / 183-1w).